The chain runs to 261 residues: 5'-nucleotidase SurE (261 aa).

Residues D8, D9, S39, and N91 each contribute to the a divalent metal cation site.

Belongs to the SurE nucleotidase family. It depends on a divalent metal cation as a cofactor.

The protein localises to the cytoplasm. The enzyme catalyses a ribonucleoside 5'-phosphate + H2O = a ribonucleoside + phosphate. Nucleotidase that shows phosphatase activity on nucleoside 5'-monophosphates. In Polaromonas sp. (strain JS666 / ATCC BAA-500), this protein is 5'-nucleotidase SurE.